We begin with the raw amino-acid sequence, 388 residues long: MNLHEYQAKELLKSYGLPIQEGLIAYSGDEAAAAFDKTPTDIAVIKAQVHAGGRGKAGGVKLVKTREEAKQVTDELIGTNLVTYQTDAAGQPVNFVLVAEDMYPVQTELYLGAVVDRSSRRVTFMASTEGGVEIEKVAEETPEKIFKVSIDPLVGLLPFQAREVAFKLGLEGKQISQFVKLMTGAYQAFVENDIDLLEINPLAVRENGEIVCVDGKISIDSNALYRLPKIAALQDKSQENERELKAAEFDLNYVALEGNIGCMVNGAGLAMATMDIIKLYGGKPANFLDVGGGATKDRVVEAFKIILEDSSVEGVLINIFGGIVRCDMIAEAIIAAIKEVDVKVPVVVRLEGNNAELGAKILEESGLKLISAQGLSDAAQKIVDAVKA.

Positions 9-245 (KELLKSYGLP…KSQENERELK (237 aa)) constitute an ATP-grasp domain. Residues K46, 53–55 (GRG), E100, Y103, and E108 contribute to the ATP site. Mg(2+) contacts are provided by N200 and D214. Residues N265 and 322–324 (GIV) each bind substrate.

This sequence belongs to the succinate/malate CoA ligase beta subunit family. Heterotetramer of two alpha and two beta subunits. The cofactor is Mg(2+).

The catalysed reaction is succinate + ATP + CoA = succinyl-CoA + ADP + phosphate. It carries out the reaction GTP + succinate + CoA = succinyl-CoA + GDP + phosphate. The protein operates within carbohydrate metabolism; tricarboxylic acid cycle; succinate from succinyl-CoA (ligase route): step 1/1. In terms of biological role, succinyl-CoA synthetase functions in the citric acid cycle (TCA), coupling the hydrolysis of succinyl-CoA to the synthesis of either ATP or GTP and thus represents the only step of substrate-level phosphorylation in the TCA. The beta subunit provides nucleotide specificity of the enzyme and binds the substrate succinate, while the binding sites for coenzyme A and phosphate are found in the alpha subunit. The protein is Succinate--CoA ligase [ADP-forming] subunit beta of Psychrobacter arcticus (strain DSM 17307 / VKM B-2377 / 273-4).